The chain runs to 172 residues: Small t antigen (172 aa).

An N-acetylmethionine; by host modification is found at Met-1. The J domain maps to 12-75; sequence ELMDLLGLER…VKVAHQPDFG (64 aa). The segment at 101-114 adopts a C4-type; atypical zinc-finger fold; it reads CSKKPSVHCPCMLC. The segment at 120-141 adopts an H1C3-type; atypical zinc-finger fold; sequence HLNRKFLRKEPLVWIDCYCIDC.

As to quaternary structure, interacts with host PPP2R1A; the interaction inhibits PP2A activity.

Its subcellular location is the host cytoplasm. The protein localises to the host nucleus. Its function is as follows. Promotes efficient viral genome replication by accelerating both G1 and S phase progression of the cell cycle. Inhibits host PP2A by binding to the A subunit, thereby displacing lower affinity regulatory B subunit. Inactivation of PP2A in turn results in the transactivation of cyclin A and cyclin D1 promoters. Late during the infection cycle, ST may induce dephosphorylation of host MTOR, leading to the inhibition of cap-dependent translation. May establish and maintain high levels of viral genomes during persistent infection in cell culture. The sequence is that of Small t antigen from BK polyomavirus (strain AS) (BKPyV).